We begin with the raw amino-acid sequence, 1142 residues long: Desmoglein-2.1 (1142 aa).

Positions 1-18 are cleaved as a signal peptide; the sequence is MARRISPVVAFLLCFGLS. Positions 19 to 38 are excised as a propeptide; sequence HFFEAEARLQHSVALHRQKR. At 39–643 the chain is on the extracellular side; that stretch reads EWIVPPQILE…AKKGSRLGPA (605 aa). Cadherin domains are found at residues 64–148, 156–258, 259–416, and 417–527; these read SDKE…APVF, VDEL…VPTL, GGPY…GPKF, and FPGT…CPTL. Asn115 carries an N-linked (GlcNAc...) asparagine glycan. The segment at 369–389 is disordered; the sequence is SGAAGGAGAMGGASGSGGGTG. Residues Asn490 and Asn576 are each glycosylated (N-linked (GlcNAc...) asparagine). A helical transmembrane segment spans residues 644–664; the sequence is GIGLLLLALLALLLIPLLLLL. The Cytoplasmic portion of the chain corresponds to 665 to 1142; the sequence is CTCGMTGAFT…RKVVTTQSVK (478 aa). Desmoglein repeat repeat units lie at residues 948 to 974, 975 to 998, 999 to 1039, and 1040 to 1071; these read VEQQ…NSGP, VAEG…ERMV, LVFR…VLQG, and TIQR…NGIS.

The protein resides in the cell junction. It localises to the desmosome. Its subcellular location is the cell membrane. The protein localises to the cytoplasm. Functionally, a component of desmosome cell-cell junctions which are required for positive regulation of cellular adhesion. Involved in the interaction of plaque proteins and intermediate filaments mediating cell-cell adhesion. Required for embryogenesis, specifically for progression of epiboly and normal convergence-extension movements during gastrulation. This Danio rerio (Zebrafish) protein is Desmoglein-2.1.